We begin with the raw amino-acid sequence, 210 residues long: Thymidylate kinase (210 aa).

Residue 10 to 17 participates in ATP binding; that stretch reads GPEGAGKS.

Belongs to the thymidylate kinase family.

It catalyses the reaction dTMP + ATP = dTDP + ADP. Functionally, phosphorylation of dTMP to form dTDP in both de novo and salvage pathways of dTTP synthesis. This is Thymidylate kinase from Pseudomonas aeruginosa (strain UCBPP-PA14).